Reading from the N-terminus, the 397-residue chain is Mannonate dehydratase 2 (397 aa).

It belongs to the mannonate dehydratase family. Fe(2+) is required as a cofactor. It depends on Mn(2+) as a cofactor.

It carries out the reaction D-mannonate = 2-dehydro-3-deoxy-D-gluconate + H2O. It participates in carbohydrate metabolism; pentose and glucuronate interconversion. In terms of biological role, catalyzes the dehydration of D-mannonate. The polypeptide is Mannonate dehydratase 2 (uxuA2) (Agrobacterium fabrum (strain C58 / ATCC 33970) (Agrobacterium tumefaciens (strain C58))).